Reading from the N-terminus, the 141-residue chain is Large ribosomal subunit protein uL16 (141 aa).

The protein belongs to the universal ribosomal protein uL16 family. As to quaternary structure, part of the 50S ribosomal subunit.

Its function is as follows. Binds 23S rRNA and is also seen to make contacts with the A and possibly P site tRNAs. This Sulfurimonas denitrificans (strain ATCC 33889 / DSM 1251) (Thiomicrospira denitrificans (strain ATCC 33889 / DSM 1251)) protein is Large ribosomal subunit protein uL16.